A 458-amino-acid polypeptide reads, in one-letter code: UDP-N-acetylmuramoylalanine--D-glutamate ligase (458 aa).

124–130 serves as a coordination point for ATP; that stretch reads GSDGKTT.

This sequence belongs to the MurCDEF family.

It localises to the cytoplasm. The catalysed reaction is UDP-N-acetyl-alpha-D-muramoyl-L-alanine + D-glutamate + ATP = UDP-N-acetyl-alpha-D-muramoyl-L-alanyl-D-glutamate + ADP + phosphate + H(+). The protein operates within cell wall biogenesis; peptidoglycan biosynthesis. Its function is as follows. Cell wall formation. Catalyzes the addition of glutamate to the nucleotide precursor UDP-N-acetylmuramoyl-L-alanine (UMA). The sequence is that of UDP-N-acetylmuramoylalanine--D-glutamate ligase from Clostridium botulinum (strain Alaska E43 / Type E3).